Consider the following 329-residue polypeptide: Serine dehydratase-like (329 aa).

Residue methionine 1 is modified to N-acetylmethionine. Lysine 48 is modified (N6-(pyridoxal phosphate)lysine).

It belongs to the serine/threonine dehydratase family. Monomer. Homodimer. Requires pyridoxal 5'-phosphate as cofactor. Expressed in lung cancer cell lines.

The catalysed reaction is L-serine = pyruvate + NH4(+). It carries out the reaction L-threonine = 2-oxobutanoate + NH4(+). It catalyses the reaction L-glutamate = D-glutamate. Its function is as follows. Catalyzes the pyridoxal-phosphate-dependent dehydrative deamination of L-threonine and L-serine to ammonia and alpha-ketobutyrate and pyruvate, respectively. Also exhibits racemase activity towards L-glutamate and D-glutamate. The polypeptide is Serine dehydratase-like (SDSL) (Homo sapiens (Human)).